The following is a 78-amino-acid chain: Acyl carrier protein (78 aa).

The Carrier domain maps to serine 2–alanine 77. Serine 37 bears the O-(pantetheine 4'-phosphoryl)serine mark.

This sequence belongs to the acyl carrier protein (ACP) family. 4'-phosphopantetheine is transferred from CoA to a specific serine of apo-ACP by AcpS. This modification is essential for activity because fatty acids are bound in thioester linkage to the sulfhydryl of the prosthetic group.

The protein resides in the cytoplasm. It participates in lipid metabolism; fatty acid biosynthesis. Its function is as follows. Carrier of the growing fatty acid chain in fatty acid biosynthesis. This Phocaeicola vulgatus (strain ATCC 8482 / DSM 1447 / JCM 5826 / CCUG 4940 / NBRC 14291 / NCTC 11154) (Bacteroides vulgatus) protein is Acyl carrier protein.